Reading from the N-terminus, the 380-residue chain is Queuine tRNA-ribosyltransferase (380 aa).

Residue D95 is the Proton acceptor of the active site. Substrate contacts are provided by residues 95–99 (DSGGF), D149, Q192, and G219. The segment at 250-256 (GVGSPDS) is RNA binding. The active-site Nucleophile is the D269. The RNA binding; important for wobble base 34 recognition stretch occupies residues 274-278 (TRIGR). 4 residues coordinate Zn(2+): C307, C309, C312, and H338.

It belongs to the queuine tRNA-ribosyltransferase family. Homodimer. Within each dimer, one monomer is responsible for RNA recognition and catalysis, while the other monomer binds to the replacement base PreQ1. It depends on Zn(2+) as a cofactor.

The enzyme catalyses 7-aminomethyl-7-carbaguanine + guanosine(34) in tRNA = 7-aminomethyl-7-carbaguanosine(34) in tRNA + guanine. The protein operates within tRNA modification; tRNA-queuosine biosynthesis. In terms of biological role, catalyzes the base-exchange of a guanine (G) residue with the queuine precursor 7-aminomethyl-7-deazaguanine (PreQ1) at position 34 (anticodon wobble position) in tRNAs with GU(N) anticodons (tRNA-Asp, -Asn, -His and -Tyr). Catalysis occurs through a double-displacement mechanism. The nucleophile active site attacks the C1' of nucleotide 34 to detach the guanine base from the RNA, forming a covalent enzyme-RNA intermediate. The proton acceptor active site deprotonates the incoming PreQ1, allowing a nucleophilic attack on the C1' of the ribose to form the product. After dissociation, two additional enzymatic reactions on the tRNA convert PreQ1 to queuine (Q), resulting in the hypermodified nucleoside queuosine (7-(((4,5-cis-dihydroxy-2-cyclopenten-1-yl)amino)methyl)-7-deazaguanosine). The sequence is that of Queuine tRNA-ribosyltransferase from Geobacillus thermodenitrificans (strain NG80-2).